The sequence spans 472 residues: Argininosuccinate lyase (472 aa).

It belongs to the lyase 1 family. Argininosuccinate lyase subfamily.

The protein resides in the cytoplasm. The catalysed reaction is 2-(N(omega)-L-arginino)succinate = fumarate + L-arginine. The protein operates within amino-acid biosynthesis; L-arginine biosynthesis; L-arginine from L-ornithine and carbamoyl phosphate: step 3/3. This Synechococcus sp. (strain CC9902) protein is Argininosuccinate lyase.